A 279-amino-acid chain; its full sequence is Membrane protein insertase YidC (279 aa).

Residues 1–22 form the signal peptide; the sequence is MKHLKRNMALLSVAALSFILTA. Residue Cys-23 is the site of N-palmitoyl cysteine attachment. A lipid anchor (S-diacylglycerol cysteine) is attached at Cys-23. A run of 5 helical transmembrane segments spans residues 35–55, 59–79, 129–149, 170–190, and 210–230; these read IWDG…SKLF, YGWG…PLMI, MAGC…YAAV, PYFI…WLSM, and PLVI…YWVV. A compositionally biased stretch (basic and acidic residues) spans 253–268; sequence EEKIQTEKAKRKAIEK. Positions 253 to 279 are disordered; it reads EEKIQTEKAKRKAIEKAKRRAMKSKRK. Residues 269-279 are compositionally biased toward basic residues; sequence AKRRAMKSKRK.

The protein belongs to the OXA1/ALB3/YidC family. Type 2 subfamily.

Its subcellular location is the cell membrane. Functionally, required for the insertion and/or proper folding and/or complex formation of integral membrane proteins into the membrane. Involved in integration of membrane proteins that insert both dependently and independently of the Sec translocase complex, as well as at least some lipoproteins. This is Membrane protein insertase YidC from Pediococcus pentosaceus (strain ATCC 25745 / CCUG 21536 / LMG 10740 / 183-1w).